A 556-amino-acid polypeptide reads, in one-letter code: 2-succinyl-5-enolpyruvyl-6-hydroxy-3-cyclohexene-1-carboxylate synthase (556 aa).

It belongs to the TPP enzyme family. MenD subfamily. Homodimer. Mg(2+) serves as cofactor. The cofactor is Mn(2+). Thiamine diphosphate is required as a cofactor.

It catalyses the reaction isochorismate + 2-oxoglutarate + H(+) = 5-enolpyruvoyl-6-hydroxy-2-succinyl-cyclohex-3-ene-1-carboxylate + CO2. Its pathway is quinol/quinone metabolism; 1,4-dihydroxy-2-naphthoate biosynthesis; 1,4-dihydroxy-2-naphthoate from chorismate: step 2/7. The protein operates within quinol/quinone metabolism; menaquinone biosynthesis. Functionally, catalyzes the thiamine diphosphate-dependent decarboxylation of 2-oxoglutarate and the subsequent addition of the resulting succinic semialdehyde-thiamine pyrophosphate anion to isochorismate to yield 2-succinyl-5-enolpyruvyl-6-hydroxy-3-cyclohexene-1-carboxylate (SEPHCHC). The sequence is that of 2-succinyl-5-enolpyruvyl-6-hydroxy-3-cyclohexene-1-carboxylate synthase from Escherichia coli O8 (strain IAI1).